The sequence spans 507 residues: ATP synthase subunit alpha (507 aa).

Residues 118–141 (VDGLGPIETTETRPIESPAPGVMD) are disordered. 172 to 179 (GDRQTGKT) contributes to the ATP binding site.

It belongs to the ATPase alpha/beta chains family. F-type ATPases have 2 components, CF(1) - the catalytic core - and CF(0) - the membrane proton channel. CF(1) has five subunits: alpha(3), beta(3), gamma(1), delta(1), epsilon(1). CF(0) has three main subunits: a(1), b(2) and c(9-12). The alpha and beta chains form an alternating ring which encloses part of the gamma chain. CF(1) is attached to CF(0) by a central stalk formed by the gamma and epsilon chains, while a peripheral stalk is formed by the delta and b chains.

It is found in the cell membrane. The enzyme catalyses ATP + H2O + 4 H(+)(in) = ADP + phosphate + 5 H(+)(out). Functionally, produces ATP from ADP in the presence of a proton gradient across the membrane. The alpha chain is a regulatory subunit. The sequence is that of ATP synthase subunit alpha from Anoxybacillus flavithermus (strain DSM 21510 / WK1).